A 149-amino-acid polypeptide reads, in one-letter code: Ribonuclease pancreatic (149 aa).

Positions 1-25 are cleaved as a signal peptide; it reads MGLEKSLILFPLFVLLLGWVQPSLG. Positions 30–49 are disordered; sequence AQKFERQHMDSSGSSNNSPT. Substrate-binding residues include Lys32 and Arg35. His37 (proton acceptor) is an active-site residue. The span at 39–49 shows a compositional bias: polar residues; that stretch reads DSSGSSNNSPT. Cystine bridges form between Cys51-Cys109, Cys65-Cys120, Cys83-Cys135, and Cys90-Cys97. 66 to 70 provides a ligand contact to substrate; it reads KPVNT. Asn87 is a glycosylation site (N-linked (GlcNAc...) asparagine). Lys91 provides a ligand contact to substrate. Catalysis depends on His144, which acts as the Proton donor.

Belongs to the pancreatic ribonuclease family. In terms of assembly, monomer. Interacts with and forms tight 1:1 complexes with RNH1. Dimerization of two such complexes may occur. Interaction with RNH1 inhibits this protein. As to expression, pancreas.

It localises to the secreted. It catalyses the reaction an [RNA] containing cytidine + H2O = an [RNA]-3'-cytidine-3'-phosphate + a 5'-hydroxy-ribonucleotide-3'-[RNA].. It carries out the reaction an [RNA] containing uridine + H2O = an [RNA]-3'-uridine-3'-phosphate + a 5'-hydroxy-ribonucleotide-3'-[RNA].. Endonuclease that catalyzes the cleavage of RNA on the 3' side of pyrimidine nucleotides. Acts on single-stranded and double-stranded RNA. In Mus pahari (Gairdner's shrew-mouse), this protein is Ribonuclease pancreatic (Rnase1).